Reading from the N-terminus, the 164-residue chain is Crossover junction endodeoxyribonuclease RuvC (164 aa).

Active-site residues include Asp-7, Glu-67, and Asp-140. Residues Asp-7, Glu-67, and Asp-140 each coordinate Mg(2+).

Belongs to the RuvC family. In terms of assembly, homodimer which binds Holliday junction (HJ) DNA. The HJ becomes 2-fold symmetrical on binding to RuvC with unstacked arms; it has a different conformation from HJ DNA in complex with RuvA. In the full resolvosome a probable DNA-RuvA(4)-RuvB(12)-RuvC(2) complex forms which resolves the HJ. Mg(2+) serves as cofactor.

The protein localises to the cytoplasm. It carries out the reaction Endonucleolytic cleavage at a junction such as a reciprocal single-stranded crossover between two homologous DNA duplexes (Holliday junction).. In terms of biological role, the RuvA-RuvB-RuvC complex processes Holliday junction (HJ) DNA during genetic recombination and DNA repair. Endonuclease that resolves HJ intermediates. Cleaves cruciform DNA by making single-stranded nicks across the HJ at symmetrical positions within the homologous arms, yielding a 5'-phosphate and a 3'-hydroxyl group; requires a central core of homology in the junction. The consensus cleavage sequence is 5'-(A/T)TT(C/G)-3'. Cleavage occurs on the 3'-side of the TT dinucleotide at the point of strand exchange. HJ branch migration catalyzed by RuvA-RuvB allows RuvC to scan DNA until it finds its consensus sequence, where it cleaves and resolves the cruciform DNA. This chain is Crossover junction endodeoxyribonuclease RuvC, found in Chloroflexus aggregans (strain MD-66 / DSM 9485).